The sequence spans 95 residues: MLHTLHRSPWLTDFAALLRLLSEGDELLLLQDGVTAAVDGNRYLESLRNAPIKVYALNEDLIARGLTGQISNDIIPIDYTDFVRLTVKHSGQMAW.

The protein belongs to the DsrH/TusB family. As to quaternary structure, heterohexamer, formed by a dimer of trimers. The hexameric TusBCD complex contains 2 copies each of TusB, TusC and TusD. The TusBCD complex interacts with TusE.

The protein resides in the cytoplasm. Functionally, part of a sulfur-relay system required for 2-thiolation of 5-methylaminomethyl-2-thiouridine (mnm(5)s(2)U) at tRNA wobble positions. This Escherichia coli O157:H7 protein is Protein TusB.